Consider the following 178-residue polypeptide: Large ribosomal subunit protein uL13m (178 aa).

At Ser2 the chain carries N-acetylserine.

This sequence belongs to the universal ribosomal protein uL13 family. Component of the mitochondrial large ribosomal subunit (mt-LSU). Mature mammalian 55S mitochondrial ribosomes consist of a small (28S) and a large (39S) subunit. The 28S small subunit contains a 12S ribosomal RNA (12S mt-rRNA) and 30 different proteins. The 39S large subunit contains a 16S rRNA (16S mt-rRNA), a copy of mitochondrial valine transfer RNA (mt-tRNA(Val)), which plays an integral structural role, and 52 different proteins. Interacts with OXA1L.

Its subcellular location is the mitochondrion. This is Large ribosomal subunit protein uL13m (MRPL13) from Homo sapiens (Human).